The chain runs to 108 residues: uncharacterized protein (108 aa).

The segment at 74–108 is disordered; it reads TGSKKRDSKANSRSRPSGTITSRGARIGLQGYKSH. Over residues 84–95 the composition is skewed to polar residues; sequence NSRSRPSGTITS.

This is an uncharacterized protein from Saccharomyces cerevisiae (strain ATCC 204508 / S288c) (Baker's yeast).